The chain runs to 887 residues: DNA gyrase subunit A (887 aa).

Residues 35-501 (LPDVRDGLKP…GFEDLEDEDL (467 aa)) form the Topo IIA-type catalytic domain. Tyr-123 (O-(5'-phospho-DNA)-tyrosine intermediate) is an active-site residue. The short motif at 528 to 534 (QNRGGRG) is the GyrA-box element. The segment at 811–865 (KEDAEDETNEDEQSTSTVSEDGTEQQREAVVNDETPGNAIHTEVIDSEENDEDGR) is disordered. Over residues 813-823 (DAEDETNEDEQ) the composition is skewed to acidic residues.

The protein belongs to the type II topoisomerase GyrA/ParC subunit family. Heterotetramer, composed of two GyrA and two GyrB chains. In the heterotetramer, GyrA contains the active site tyrosine that forms a transient covalent intermediate with DNA, while GyrB binds cofactors and catalyzes ATP hydrolysis.

It localises to the cytoplasm. The catalysed reaction is ATP-dependent breakage, passage and rejoining of double-stranded DNA.. Its function is as follows. A type II topoisomerase that negatively supercoils closed circular double-stranded (ds) DNA in an ATP-dependent manner to modulate DNA topology and maintain chromosomes in an underwound state. Negative supercoiling favors strand separation, and DNA replication, transcription, recombination and repair, all of which involve strand separation. Also able to catalyze the interconversion of other topological isomers of dsDNA rings, including catenanes and knotted rings. Type II topoisomerases break and join 2 DNA strands simultaneously in an ATP-dependent manner. The sequence is that of DNA gyrase subunit A from Staphylococcus aureus (strain MSSA476).